We begin with the raw amino-acid sequence, 444 residues long: Tol-Pal system protein TolB (444 aa).

The first 18 residues, 1-18 (MRNIIYFILLLFSCTGYA), serve as a signal peptide directing secretion.

It belongs to the TolB family. In terms of assembly, the Tol-Pal system is composed of five core proteins: the inner membrane proteins TolA, TolQ and TolR, the periplasmic protein TolB and the outer membrane protein Pal. They form a network linking the inner and outer membranes and the peptidoglycan layer.

It localises to the periplasm. Part of the Tol-Pal system, which plays a role in outer membrane invagination during cell division and is important for maintaining outer membrane integrity. This Rickettsia canadensis (strain McKiel) protein is Tol-Pal system protein TolB.